A 390-amino-acid chain; its full sequence is Oxygen-dependent coproporphyrinogen-III oxidase (390 aa).

Residues 131–140 (VLQDGDVFEK) are important for dimerization. S181 serves as a coordination point for substrate. H195 (proton donor) is an active-site residue. Substrate-binding positions include 197–199 (NYR) and 348–353 (GARYES). Residues 329–365 (YVEFNLIYDRGTKFGLYTPGARYESILMSLPLHARWE) form an important for dimerization region.

The protein belongs to the aerobic coproporphyrinogen-III oxidase family. Homodimer.

It carries out the reaction coproporphyrinogen III + O2 + 2 H(+) = protoporphyrinogen IX + 2 CO2 + 2 H2O. Its pathway is porphyrin-containing compound metabolism; protoporphyrin-IX biosynthesis; protoporphyrinogen-IX from coproporphyrinogen-III (O2 route): step 1/1. In terms of biological role, involved in the heme biosynthesis. Catalyzes the aerobic oxidative decarboxylation of propionate groups of rings A and B of coproporphyrinogen-III to yield the vinyl groups in protoporphyrinogen-IX. This chain is Oxygen-dependent coproporphyrinogen-III oxidase (Coprox), found in Drosophila melanogaster (Fruit fly).